We begin with the raw amino-acid sequence, 332 residues long: Glycerol-3-phosphate dehydrogenase [NAD(P)+] (332 aa).

NADPH contacts are provided by Ser15, Trp16, and Lys110. Sn-glycerol 3-phosphate contacts are provided by Lys110, Gly137, and Ser139. Residue Ala141 coordinates NADPH. The sn-glycerol 3-phosphate site is built by Lys192, Asp245, Ser255, Arg256, and Asn257. The Proton acceptor role is filled by Lys192. Arg256 provides a ligand contact to NADPH. Residue Glu282 participates in NADPH binding.

The protein belongs to the NAD-dependent glycerol-3-phosphate dehydrogenase family.

The protein resides in the cytoplasm. It catalyses the reaction sn-glycerol 3-phosphate + NAD(+) = dihydroxyacetone phosphate + NADH + H(+). The catalysed reaction is sn-glycerol 3-phosphate + NADP(+) = dihydroxyacetone phosphate + NADPH + H(+). The protein operates within membrane lipid metabolism; glycerophospholipid metabolism. Catalyzes the reduction of the glycolytic intermediate dihydroxyacetone phosphate (DHAP) to sn-glycerol 3-phosphate (G3P), the key precursor for phospholipid synthesis. This chain is Glycerol-3-phosphate dehydrogenase [NAD(P)+], found in Coxiella burnetii (strain CbuK_Q154) (Coxiella burnetii (strain Q154)).